A 530-amino-acid chain; its full sequence is Chaperone Ric-8A (530 aa).

At serine 435 the chain carries Phosphoserine. Phosphothreonine is present on residues threonine 440 and threonine 442. Phosphoserine occurs at positions 501, 522, 523, and 527.

This sequence belongs to the synembryn family. In terms of assembly, interacts with GDP-bound G alpha proteins GNAI1, GNAO1 and GNAQ, and with GNA13 with lower affinity. Does not interact with G-alpha proteins when they are in complex with subunits beta and gamma. Interacts (via C-terminus) with RGS14; the interaction stimulates the dissociation of the complex between RGS14 and the active GTP-bound form of GNAI1. Interacts with NCS1; interaction is favored in the absence of Ca(2+) and myristoylation of NCS1 is not required. In terms of processing, phosphorylated at Ser-435 and Thr-440 by CK2, stabilizing its interface with G alpha proteins.

It is found in the cytoplasm. The protein localises to the cell cortex. In terms of biological role, chaperone that specifically binds and folds nascent G alpha proteins prior to G protein heterotrimer formation, promoting their stability and activity: folds GNAI1, GNAO1, GNA13 and GNAQ. Does not fold G(s) G-alpha proteins GNAS nor GNAL. Also acts as a guanine nucleotide exchange factor (GEF) for G alpha proteins by stimulating exchange of bound GDP for free GTP. Involved in regulation of microtubule pulling forces during mitotic movement of chromosomes by stimulating G(i)-alpha protein (GNAI1), possibly leading to release G(i)-alpha-GTP and NuMA proteins from the NuMA-GPSM2-G(i)-alpha-GDP complex. Also acts as an activator for G(q)-alpha (GNAQ) protein by enhancing the G(q)-coupled receptor-mediated ERK activation. The protein is Chaperone Ric-8A (RIC8A) of Pongo abelii (Sumatran orangutan).